Reading from the N-terminus, the 358-residue chain is Plastoglobulin-1, chloroplastic (358 aa).

The N-terminal 47 residues, 1–47, are a transit peptide targeting the chloroplast; it reads MALLSSTLRAPLVFSKNPKPVSLSSLHSRIYLSPRSPRFPSLRFISA. A disordered region spans residues 48-114; the sequence is AGDTGDAEKP…NDAGNGTPTF (67 aa).

Belongs to the PAP/fibrillin family.

The protein localises to the plastid. It is found in the chloroplast. In terms of biological role, may form together with other plastoglobulins a coat on the surface of the lipoprotein particle. The coat may contain receptors for attachment to the thylakoid membrane as well as regulatory proteins that may function in the transfer of lipids to and from the thylakoid membranes. In Pisum sativum (Garden pea), this protein is Plastoglobulin-1, chloroplastic (PG1).